Reading from the N-terminus, the 488-residue chain is Mannitol 2-dehydrogenase (488 aa).

An NAD(+)-binding site is contributed by Ile37–Ala48.

Belongs to the mannitol dehydrogenase family. Monomer.

It catalyses the reaction D-mannitol + NAD(+) = D-fructose + NADH + H(+). Functionally, catalyzes the NAD(H)-dependent interconversion of D-fructose and D-mannitol in the mannitol metabolic pathway. The sequence is that of Mannitol 2-dehydrogenase from Aspergillus niger (strain ATCC MYA-4892 / CBS 513.88 / FGSC A1513).